The following is a 374-amino-acid chain: Nudix hydrolase 20, chloroplastic (374 aa).

The N-terminal 49 residues, 1–49 (MASGFCSLALTVTTSLFSSHAITRRVLPILRWRSSSMSLSPLRHSRALS), are a transit peptide targeting the chloroplast. The region spanning 205–346 (GYGVHMNGYV…KANCSLVIID (142 aa)) is the Nudix hydrolase domain. The short motif at 244–265 (GGLPHGISCGGNLVKECEEEAG) is the Nudix box element. Glu259 and Glu263 together coordinate Mg(2+).

The protein belongs to the Nudix hydrolase family. It depends on Mg(2+) as a cofactor. Mn(2+) is required as a cofactor. In terms of tissue distribution, expressed in leaves and inflorescences.

It is found in the plastid. The protein localises to the chloroplast. In terms of biological role, probably mediates the hydrolysis of some nucleoside diphosphate derivatives. This Arabidopsis thaliana (Mouse-ear cress) protein is Nudix hydrolase 20, chloroplastic (NUDT20).